Consider the following 280-residue polypeptide: 2-dehydro-3-deoxyphosphooctonate aldolase (280 aa).

This sequence belongs to the KdsA family.

Its subcellular location is the cytoplasm. It carries out the reaction D-arabinose 5-phosphate + phosphoenolpyruvate + H2O = 3-deoxy-alpha-D-manno-2-octulosonate-8-phosphate + phosphate. The protein operates within carbohydrate biosynthesis; 3-deoxy-D-manno-octulosonate biosynthesis; 3-deoxy-D-manno-octulosonate from D-ribulose 5-phosphate: step 2/3. It participates in bacterial outer membrane biogenesis; lipopolysaccharide biosynthesis. The protein is 2-dehydro-3-deoxyphosphooctonate aldolase of Neisseria meningitidis serogroup A / serotype 4A (strain DSM 15465 / Z2491).